The primary structure comprises 502 residues: Probable cobyric acid synthase (502 aa).

The 199-residue stretch at 250–448 (KITIGTLRLP…FHGIFHNFEF (199 aa)) folds into the GATase cobBQ-type domain. Cys330 functions as the Nucleophile in the catalytic mechanism. Residue His440 is part of the active site.

It belongs to the CobB/CobQ family. CobQ subfamily.

The protein operates within cofactor biosynthesis; adenosylcobalamin biosynthesis. Functionally, catalyzes amidations at positions B, D, E, and G on adenosylcobyrinic A,C-diamide. NH(2) groups are provided by glutamine, and one molecule of ATP is hydrogenolyzed for each amidation. The polypeptide is Probable cobyric acid synthase (Methanosphaera stadtmanae (strain ATCC 43021 / DSM 3091 / JCM 11832 / MCB-3)).